We begin with the raw amino-acid sequence, 307 residues long: MSEHHVNIPAPQFSTYATVIDPPKHVTATHPDELTTASHPQPTHPSAPQDPSPAVPSTPVRVPYPTAPPPIPPAPEAVTAGPKKMALAPSSTKTYKQKRTFKVIIVGNAAVGKTCLSFRFCCGRFPEHTEATIGVDFRERSCVIENELLRVQLWDTAGQERYRQSIVAHYYRNVNAVVFVYDVTCRESFNDLALWIKECEKHGLVGDSEVPRILIGNKCDVECTNRVSTDEAQMFADRNNMALFETSAKLASEADHVESIFLTLLHKLQQSKPMHVQSQDERHQKEQERLILKANETENVEEEGFCC.

The segment at 19-80 (VIDPPKHVTA…IPPAPEAVTA (62 aa)) is disordered. Pro residues-rich tracts occupy residues 42-56 (PTHP…PAVP) and 65-75 (PTAPPPIPPAP). Position 107-114 (107-114 (GNAAVGKT)) interacts with GTP. The Effector region signature appears at 129–137 (TEATIGVDF). GTP-binding positions include 155–159 (DTAGQ) and 217–220 (NKCD). S-geranylgeranyl cysteine attachment occurs at residues cysteine 306 and cysteine 307.

It belongs to the small GTPase superfamily. Rab family.

Its subcellular location is the cell membrane. The protein is Ras-related protein Rab-33 (rab-33) of Caenorhabditis elegans.